The chain runs to 185 residues: Intraflagellar transport protein 22 homolog (185 aa).

GTP is bound by residues 10-17 (GPCESGKT), 63-67 (DCGGD), and 123-126 (HKPG). At Ser-137 the chain carries Phosphoserine.

It belongs to the small GTPase superfamily. Rab family. As to quaternary structure, component of the IFT complex B, at least composed of IFT20, IFT22, IFT25, IFT27, IFT46, IFT52, TRAF3IP1/IFT54, IFT57, IFT74, IFT80, IFT81, and IFT88. Interacts with IFT88. Interacts with CFAP61.

The protein localises to the cell projection. It localises to the cilium. Small GTPase-like component of the intraflagellar transport (IFT) complex B. In Rattus norvegicus (Rat), this protein is Intraflagellar transport protein 22 homolog (Ift22).